The primary structure comprises 376 residues: Chaperone protein DnaJ (376 aa).

Positions 5-70 (DYYEVLGVGR…DKKAAYDQFG (66 aa)) constitute a J domain. The CR-type zinc finger occupies 132-210 (GLTKELRIPT…CHGDGRVEKS (79 aa)). Zn(2+) contacts are provided by Cys-145, Cys-148, Cys-162, Cys-165, Cys-184, Cys-187, Cys-198, and Cys-201. 4 CXXCXGXG motif repeats span residues 145–152 (CDLCDGSG), 162–169 (CTTCHGQG), 184–191 (CPTCHGRG), and 198–205 (CTKCHGDG).

This sequence belongs to the DnaJ family. Homodimer. Requires Zn(2+) as cofactor.

Its subcellular location is the cytoplasm. In terms of biological role, participates actively in the response to hyperosmotic and heat shock by preventing the aggregation of stress-denatured proteins and by disaggregating proteins, also in an autonomous, DnaK-independent fashion. Unfolded proteins bind initially to DnaJ; upon interaction with the DnaJ-bound protein, DnaK hydrolyzes its bound ATP, resulting in the formation of a stable complex. GrpE releases ADP from DnaK; ATP binding to DnaK triggers the release of the substrate protein, thus completing the reaction cycle. Several rounds of ATP-dependent interactions between DnaJ, DnaK and GrpE are required for fully efficient folding. Also involved, together with DnaK and GrpE, in the DNA replication of plasmids through activation of initiation proteins. This chain is Chaperone protein DnaJ, found in Shewanella putrefaciens (strain CN-32 / ATCC BAA-453).